The following is a 116-amino-acid chain: Large ribosomal subunit protein bL17 (116 aa).

The protein belongs to the bacterial ribosomal protein bL17 family. In terms of assembly, part of the 50S ribosomal subunit. Contacts protein L32.

In Microcystis aeruginosa (strain NIES-843 / IAM M-2473), this protein is Large ribosomal subunit protein bL17.